A 118-amino-acid polypeptide reads, in one-letter code: Basic phospholipase A2 nigroxin B (118 aa).

7 disulfide bridges follow: Cys-11–Cys-70, Cys-25–Cys-117, Cys-27–Cys-43, Cys-42–Cys-98, Cys-49–Cys-91, Cys-59–Cys-84, and Cys-77–Cys-89. Positions 26, 28, and 30 each coordinate Ca(2+). His-46 is an active-site residue. Asp-47 serves as a coordination point for Ca(2+). Asp-92 is an active-site residue.

The protein belongs to the phospholipase A2 family. Group I subfamily. D49 sub-subfamily. Ca(2+) is required as a cofactor. Expressed by the venom gland.

Its subcellular location is the secreted. The enzyme catalyses a 1,2-diacyl-sn-glycero-3-phosphocholine + H2O = a 1-acyl-sn-glycero-3-phosphocholine + a fatty acid + H(+). In terms of biological role, snake venom phospholipase A2 (PLA2) that has only a weak enzymatic activity. It has a myotoxic activity in vivo (dystrophic effect). PLA2 catalyzes the calcium-dependent hydrolysis of the 2-acyl groups in 3-sn-phosphoglycerides. The chain is Basic phospholipase A2 nigroxin B from Micrurus nigrocinctus (Central American coral snake).